The sequence spans 251 residues: MSLDNDINTKKRKLQDDEKPRKKRKHKRPTRDDDADLDVEAGLNRAFARMDGQLLADHLAQKTRRFGTELSSVELNDLYISAASIRDSSSFEKDRTLENLPSFLEKFAQEKEKLDEAPKKNGSPHTLIVAAAGLRAADLVRACRKFQKKGSPVAKLFAKHFKLEEQVAFLNKTRTGIAVGTPQRLIDLIEHGALSVENLRRIVVDASHIDQKKRNITDMRETMMPLAKLLARADFKERYTDEKKHIDLLFY.

The tract at residues 1 to 37 (MSLDNDINTKKRKLQDDEKPRKKRKHKRPTRDDDADL) is disordered.

It belongs to the CMS1 family.

It localises to the nucleus. Functionally, may play a role in the regulation of DNA replication and cell cycle control. The sequence is that of Protein CMS1 (CSM1) from Chaetomium thermophilum (strain DSM 1495 / CBS 144.50 / IMI 039719) (Thermochaetoides thermophila).